The primary structure comprises 324 residues: Olfactory receptor 51D1 (324 aa).

The Extracellular portion of the chain corresponds to 1-38 (MQKPQLLVPIIATSNGNLVHAAYFLLVGIPGLGPTIHF). A helical transmembrane segment spans residues 39 to 59 (WLAFPLCFMYALATLGNLTIV). The Cytoplasmic segment spans residues 60-67 (LIIRVERR). The helical transmembrane segment at 68–88 (LHEPMYLFLAMLSTIDLVLSS) threads the bilayer. The Extracellular portion of the chain corresponds to 89–112 (ITMPKMASLFLMGIQEIEFNICLA). Cysteine 110 and cysteine 202 form a disulfide bridge. Residues 113–133 (QMFLIHALSAVESAVLLAMAF) form a helical membrane-spanning segment. At 134 to 152 (DRFVAICHPLRHASVLTGC) the chain is on the cytoplasmic side. The chain crosses the membrane as a helical span at residues 153–173 (TVAKIGLSALTRGFVFFFPLP). Residues 174 to 209 (FILKWLSYCQTHTVTHSFCLHQDIMKLSCTDTRVNV) are Extracellular-facing. The chain crosses the membrane as a helical span at residues 210-230 (VYGLFIILSVMGVDSLFIGFS). The Cytoplasmic portion of the chain corresponds to 231 to 250 (YILILWAVLELSSRRAALKA). The helical transmembrane segment at 251–271 (FNTCISHLCAVLVFYVPLIGL) threads the bilayer. The Extracellular segment spans residues 272-285 (SVVHRLGGPTSLLH). The chain crosses the membrane as a helical span at residues 286-306 (VVMANTYLLLPPVVNPLVYGA). Topologically, residues 307 to 324 (KTKEICSRVLCMFSQGGK) are cytoplasmic.

It belongs to the G-protein coupled receptor 1 family.

It localises to the cell membrane. Odorant receptor. The polypeptide is Olfactory receptor 51D1 (OR51D1) (Homo sapiens (Human)).